A 264-amino-acid polypeptide reads, in one-letter code: Endonuclease V (264 aa).

2 residues coordinate Mg(2+): D72 and D137.

This sequence belongs to the endonuclease V family. It depends on Mg(2+) as a cofactor.

It localises to the cytoplasm. The catalysed reaction is Endonucleolytic cleavage at apurinic or apyrimidinic sites to products with a 5'-phosphate.. In terms of biological role, DNA repair enzyme involved in the repair of deaminated bases. Selectively cleaves double-stranded DNA at the second phosphodiester bond 3' to a deoxyinosine leaving behind the intact lesion on the nicked DNA. This is Endonuclease V from Halobacterium salinarum (strain ATCC 700922 / JCM 11081 / NRC-1) (Halobacterium halobium).